The sequence spans 424 residues: D-inositol 3-phosphate glycosyltransferase (424 aa).

H16 contacts 1D-myo-inositol 3-phosphate. Residues 22–23 (QP) and G30 each bind UDP-N-acetyl-alpha-D-glucosamine. 1D-myo-inositol 3-phosphate is bound by residues 27–32 (DAGGMN), K85, Y118, T142, and R162. R240 and K245 together coordinate UDP-N-acetyl-alpha-D-glucosamine. M313, R314, and A316 together coordinate Mg(2+). UDP-N-acetyl-alpha-D-glucosamine-binding residues include E326 and E334. T340 lines the Mg(2+) pocket.

It belongs to the glycosyltransferase group 1 family. MshA subfamily. Homodimer.

The catalysed reaction is 1D-myo-inositol 3-phosphate + UDP-N-acetyl-alpha-D-glucosamine = 1D-myo-inositol 2-acetamido-2-deoxy-alpha-D-glucopyranoside 3-phosphate + UDP + H(+). Functionally, catalyzes the transfer of a N-acetyl-glucosamine moiety to 1D-myo-inositol 3-phosphate to produce 1D-myo-inositol 2-acetamido-2-deoxy-glucopyranoside 3-phosphate in the mycothiol biosynthesis pathway. The protein is D-inositol 3-phosphate glycosyltransferase of Jonesia denitrificans (strain ATCC 14870 / DSM 20603 / BCRC 15368 / CIP 55.134 / JCM 11481 / NBRC 15587 / NCTC 10816 / Prevot 55134) (Listeria denitrificans).